The primary structure comprises 302 residues: MDTQAVRAYLLDLQDRITTAASALDGGTFVTDAWEKPPTERLRGSGRTRILEGGALLERGGVGFSHVMGDTLPPSATANRPELAGRGFEAMGVSLVFHPRNPYVPTVHMNVRCFVAVRSDAAPVWWFGGGMDLTPYYGFTEDASHFHRTCQGALAPYGDELYPRFKQWCDDYFYLKHRKEARGIGGIFFDDFAELGFERSFEMMRSVGDAFLPAWLPIAEQRHATAYGERERAFQAYRRGRYVEFNLVFDRGTLFGLQSGGRAESILMSMPPVANWRYDWQPEPGSPEAALYTDFLPARDWV.

Residue serine 94 participates in substrate binding. Residues histidine 98 and histidine 108 each contribute to the a divalent metal cation site. Histidine 108 (proton donor) is an active-site residue. 110–112 (NVR) lines the substrate pocket. Residues histidine 147 and histidine 177 each contribute to the a divalent metal cation site. Residues 242–277 (YVEFNLVFDRGTLFGLQSGGRAESILMSMPPVANWR) are important for dimerization. 260 to 262 (GGR) serves as a coordination point for substrate.

It belongs to the aerobic coproporphyrinogen-III oxidase family. As to quaternary structure, homodimer. Requires a divalent metal cation as cofactor.

It is found in the cytoplasm. It catalyses the reaction coproporphyrinogen III + O2 + 2 H(+) = protoporphyrinogen IX + 2 CO2 + 2 H2O. Its pathway is porphyrin-containing compound metabolism; protoporphyrin-IX biosynthesis; protoporphyrinogen-IX from coproporphyrinogen-III (O2 route): step 1/1. Functionally, involved in the heme biosynthesis. Catalyzes the aerobic oxidative decarboxylation of propionate groups of rings A and B of coproporphyrinogen-III to yield the vinyl groups in protoporphyrinogen-IX. This chain is Oxygen-dependent coproporphyrinogen-III oxidase, found in Ralstonia pickettii (strain 12J).